The chain runs to 252 residues: Hydroxyacylglutathione hydrolase (252 aa).

Residues His54, His56, Asp58, His59, His111, Asp130, and His170 each contribute to the Zn(2+) site.

This sequence belongs to the metallo-beta-lactamase superfamily. Glyoxalase II family. In terms of assembly, monomer. The cofactor is Zn(2+).

It catalyses the reaction an S-(2-hydroxyacyl)glutathione + H2O = a 2-hydroxy carboxylate + glutathione + H(+). Its pathway is secondary metabolite metabolism; methylglyoxal degradation; (R)-lactate from methylglyoxal: step 2/2. Thiolesterase that catalyzes the hydrolysis of S-D-lactoyl-glutathione to form glutathione and D-lactic acid. The protein is Hydroxyacylglutathione hydrolase of Francisella philomiragia subsp. philomiragia (strain ATCC 25017 / CCUG 19701 / FSC 153 / O#319-036).